Reading from the N-terminus, the 71-residue chain is Small ribosomal subunit protein bS18 (71 aa).

Belongs to the bacterial ribosomal protein bS18 family. Part of the 30S ribosomal subunit. Forms a tight heterodimer with protein bS6.

In terms of biological role, binds as a heterodimer with protein bS6 to the central domain of the 16S rRNA, where it helps stabilize the platform of the 30S subunit. In Thermosynechococcus vestitus (strain NIES-2133 / IAM M-273 / BP-1), this protein is Small ribosomal subunit protein bS18.